A 221-amino-acid chain; its full sequence is Orotidine 5'-phosphate decarboxylase (221 aa).

Substrate-binding positions include D12, K34, 60–69 (DFKVADIPNT), S117, 170–180 (PGVGAQGGKAS), G193, and R194. Catalysis depends on K62, which acts as the Proton donor.

Belongs to the OMP decarboxylase family. Type 1 subfamily. Homodimer.

The enzyme catalyses orotidine 5'-phosphate + H(+) = UMP + CO2. It functions in the pathway pyrimidine metabolism; UMP biosynthesis via de novo pathway; UMP from orotate: step 2/2. Catalyzes the decarboxylation of orotidine 5'-monophosphate (OMP) to uridine 5'-monophosphate (UMP). The protein is Orotidine 5'-phosphate decarboxylase of Methanosarcina barkeri (strain Fusaro / DSM 804).